The sequence spans 91 residues: Protein transport protein sft1 (91 aa).

At 1-68 the chain is on the cytoplasmic side; sequence MNDQNERRLE…RVVRSAGRRR (68 aa). The chain crosses the membrane as a helical; Anchor for type IV membrane protein span at residues 69–86; that stretch reads IMTMVLAIVGSILIIYYA. At 87 to 91 the chain is on the lumenal side; sequence SKWFF.

As to quaternary structure, component of a SNARE complex consisting of sed5, gos1, ykt6 and sft1.

It is found in the golgi apparatus membrane. Functionally, vesicle SNARE required for retrograde transport within the Golgi complex. In Schizosaccharomyces pombe (strain 972 / ATCC 24843) (Fission yeast), this protein is Protein transport protein sft1 (sft1).